Consider the following 579-residue polypeptide: L-ascorbate oxidase (579 aa).

An N-terminal signal peptide occupies residues Met1–Gly30. Plastocyanin-like domains lie at Ile33–Asp152 and Asp164–Pro330. Cystine bridges form between Cys49–Cys231, Cys111–Cys568, and Cys210–Cys223. Residues His90 and His92 each coordinate Cu cation. N-linked (GlcNAc...) asparagine glycosylation is present at Asn122. Cu cation-binding residues include His134 and His136. Asn355 and Asn470 each carry an N-linked (GlcNAc...) asparagine glycan. A Plastocyanin-like 3 domain is found at Asn374 to Glu553. His475, His478, His480, His536, Cys537, His538, His542, and Met547 together coordinate Cu cation.

Belongs to the multicopper oxidase family. In terms of assembly, dimer. Requires Cu cation as cofactor.

It localises to the secreted. The enzyme catalyses 4 L-ascorbate + O2 = 4 monodehydro-L-ascorbate radical + 2 H2O. Its function is as follows. May be involved in a redox system involving ascorbic acid. The protein is L-ascorbate oxidase (AAO) of Cucurbita maxima (Pumpkin).